The chain runs to 587 residues: Bifunctional lycopene cyclase/phytoene synthase (587 aa).

The tract at residues 1–242 (MGYDYALVHV…IVFGIAAFDK (242 aa)) is lycopene beta-cyclase. Transmembrane regions (helical) follow at residues 8-28 (VHVKYTIPLAALLTVFSYPVF), 35-55 (RTLFIVTIAFVATIPWDSYLI), 77-97 (AEELFFFIIQTYITAQLYIIL), 120-140 (GKLVGQLALSGSVLLGTWLIA), 150-170 (LILVWACTFALFTWTITAHFL), 172-192 (ALPLACTALPILLPTVYLWIV), and 220-240 (IEEATFFLVTNMLIVFGIAAF). The interval 249–587 (AFPEKFDKPA…WVAWSTLMAA (339 aa)) is phytoene synthase.

This sequence in the N-terminal section; belongs to the lycopene beta-cyclase family. It in the C-terminal section; belongs to the phytoene/squalene synthase family.

It localises to the membrane. The enzyme catalyses all-trans-lycopene = gamma-carotene. It carries out the reaction gamma-carotene = all-trans-beta-carotene. It catalyses the reaction 2 (2E,6E,10E)-geranylgeranyl diphosphate = 15-cis-phytoene + 2 diphosphate. Its pathway is carotenoid biosynthesis; beta-carotene biosynthesis. It functions in the pathway carotenoid biosynthesis; phytoene biosynthesis; all-trans-phytoene from geranylgeranyl diphosphate: step 1/1. Its function is as follows. Bifunctional enzyme that catalyzes the reactions from geranylgeranyl diphosphate to phytoene (phytoene synthase) and lycopene to beta-carotene via the intermediate gamma-carotene (lycopene cyclase). The sequence is that of Bifunctional lycopene cyclase/phytoene synthase from Colletotrichum graminicola (strain M1.001 / M2 / FGSC 10212) (Maize anthracnose fungus).